Here is a 190-residue protein sequence, read N- to C-terminus: Signal peptidase I W (190 aa).

A helical membrane pass occupies residues 4-24 (ISNILYVIIFTLIIVLTLVVI). Residue S45 is part of the active site. The helical transmembrane segment at 143–163 (PIGTAVLLIVPGVMLLVYAFV) threads the bilayer.

It belongs to the peptidase S26B family.

Its subcellular location is the cell membrane. The catalysed reaction is Cleavage of hydrophobic, N-terminal signal or leader sequences from secreted and periplasmic proteins.. Required for the cleavage of the signal sequence of TasA and TapA, which are involved in biofilm formation. This chain is Signal peptidase I W, found in Bacillus subtilis (strain 168).